Reading from the N-terminus, the 699-residue chain is Elongation factor G (699 aa).

A tr-type G domain is found at 8–288 (EDYRNFGIMA…AVVDYLPSPL (281 aa)). GTP is bound by residues 17–24 (AHIDAGKT), 86–90 (DTPGH), and 140–143 (NKMD).

This sequence belongs to the TRAFAC class translation factor GTPase superfamily. Classic translation factor GTPase family. EF-G/EF-2 subfamily.

Its subcellular location is the cytoplasm. Its function is as follows. Catalyzes the GTP-dependent ribosomal translocation step during translation elongation. During this step, the ribosome changes from the pre-translocational (PRE) to the post-translocational (POST) state as the newly formed A-site-bound peptidyl-tRNA and P-site-bound deacylated tRNA move to the P and E sites, respectively. Catalyzes the coordinated movement of the two tRNA molecules, the mRNA and conformational changes in the ribosome. The sequence is that of Elongation factor G from Rhizobium etli (strain ATCC 51251 / DSM 11541 / JCM 21823 / NBRC 15573 / CFN 42).